We begin with the raw amino-acid sequence, 383 residues long: Putative gustatory receptor 22c (383 aa).

Over 1–11 (MFASRSDLQSR) the chain is Cytoplasmic. A helical membrane pass occupies residues 12-32 (LCWIILKATLYSSWFLGVFPY). Residues 33–45 (RFDSRNGQLKRSR) are Extracellular-facing. Residues 46–66 (FLLFYGLILNFFLLLKMVCSG) traverse the membrane as a helical segment. The Cytoplasmic segment spans residues 67-86 (GQKLGIPEAFARNSVLENTH). Residues 87-107 (YTTGMLAVFSCVVIHFLNFWG) form a helical membrane-spanning segment. The Extracellular portion of the chain corresponds to 108-144 (STRVQDLANELLVLEYQQFASLNETKCPKFNSFVIQK). N-linked (GlcNAc...) asparagine glycosylation is present at Asn-130. A helical transmembrane segment spans residues 145 to 165 (WLSVIGLLLSYLSIAYGLPGN). Residues 166 to 250 (NFSVEMVLIN…YMVATYEYHM (85 aa)) lie on the Cytoplasmic side of the membrane. The helical transmembrane segment at 251–271 (TLVLTTGLASNFLAIYSWIVL) threads the bilayer. Residues 272 to 279 (DISMNINF) lie on the Extracellular side of the membrane. A helical transmembrane segment spans residues 280–300 (IYLLIFPLFLLVNVWNLWLSI). The Cytoplasmic portion of the chain corresponds to 301-360 (AASDLAENAGKSTQTVLKLFADLEVKDIELERSVNEFALLCGHCQFNFHVCGLFTINYKM). The chain crosses the membrane as a helical span at residues 361 to 381 (GFQMIITSFLYLIYMIQFDFM). Residues 382–383 (NL) lie on the Extracellular side of the membrane.

The protein belongs to the insect chemoreceptor superfamily. Gustatory receptor (GR) family. Gr22e subfamily. In terms of tissue distribution, taste bristles in the foreleg and labial palps.

It is found in the cell membrane. Its function is as follows. Probable gustatory receptor which mediates acceptance or avoidance behavior, depending on its substrates. The chain is Putative gustatory receptor 22c (Gr22c) from Drosophila melanogaster (Fruit fly).